The sequence spans 494 residues: Ketol-acid reductoisomerase (NADP(+)) (494 aa).

Positions 14–208 (LDQLGRCRFM…GGHRAGCLES (195 aa)) constitute a KARI N-terminal Rossmann domain. NADP(+)-binding positions include 45–48 (CGAQ), Arg68, Arg76, Ser78, and 108–110 (DKQ). His132 is an active-site residue. Gly158 serves as a coordination point for NADP(+). 2 consecutive KARI C-terminal knotted domains span residues 209 to 344 (SFVA…NYPS) and 345 to 487 (TDVE…MTDM). Positions 217, 221, 389, and 393 each coordinate Mg(2+). Substrate is bound at residue Ser414.

The protein belongs to the ketol-acid reductoisomerase family. Mg(2+) serves as cofactor.

It catalyses the reaction (2R)-2,3-dihydroxy-3-methylbutanoate + NADP(+) = (2S)-2-acetolactate + NADPH + H(+). It carries out the reaction (2R,3R)-2,3-dihydroxy-3-methylpentanoate + NADP(+) = (S)-2-ethyl-2-hydroxy-3-oxobutanoate + NADPH + H(+). The protein operates within amino-acid biosynthesis; L-isoleucine biosynthesis; L-isoleucine from 2-oxobutanoate: step 2/4. Its pathway is amino-acid biosynthesis; L-valine biosynthesis; L-valine from pyruvate: step 2/4. Its function is as follows. Involved in the biosynthesis of branched-chain amino acids (BCAA). Catalyzes an alkyl-migration followed by a ketol-acid reduction of (S)-2-acetolactate (S2AL) to yield (R)-2,3-dihydroxy-isovalerate. In the isomerase reaction, S2AL is rearranged via a Mg-dependent methyl migration to produce 3-hydroxy-3-methyl-2-ketobutyrate (HMKB). In the reductase reaction, this 2-ketoacid undergoes a metal-dependent reduction by NADPH to yield (R)-2,3-dihydroxy-isovalerate. This is Ketol-acid reductoisomerase (NADP(+)) from Vibrio vulnificus (strain CMCP6).